Here is a 263-residue protein sequence, read N- to C-terminus: Chymotrypsinogen B (263 aa).

Positions 1-18 (MAFLWLVSCFALVGATFG) are cleaved as a signal peptide. Intrachain disulfides connect Cys19-Cys140, Cys60-Cys76, Cys154-Cys219, Cys186-Cys200, and Cys209-Cys238. One can recognise a Peptidase S1 domain in the interval 34 to 261 (IVNGEDAIPG…LMPWVQQILE (228 aa)). His75 functions as the Charge relay system in the catalytic mechanism. Ser93 carries the phosphoserine modification. The active-site Charge relay system is the Asp120. Ser213 acts as the Charge relay system in catalysis.

This sequence belongs to the peptidase S1 family.

It localises to the secreted. Its subcellular location is the extracellular space. It carries out the reaction Preferential cleavage: Tyr-|-Xaa, Trp-|-Xaa, Phe-|-Xaa, Leu-|-Xaa.. The polypeptide is Chymotrypsinogen B (Ctrb1) (Rattus norvegicus (Rat)).